We begin with the raw amino-acid sequence, 272 residues long: Regulatory protein RecX (272 aa).

This sequence belongs to the RecX family.

The protein resides in the cytoplasm. Functionally, modulates RecA activity. The chain is Regulatory protein RecX from Staphylococcus saprophyticus subsp. saprophyticus (strain ATCC 15305 / DSM 20229 / NCIMB 8711 / NCTC 7292 / S-41).